The sequence spans 388 residues: Ribosomal RNA large subunit methyltransferase F (388 aa).

Over residues M1–K22 the composition is skewed to polar residues. The tract at residues M1–A51 is disordered. Basic residues predominate over residues I27 to P36.

It belongs to the methyltransferase superfamily. METTL16/RlmF family.

Its subcellular location is the cytoplasm. The catalysed reaction is adenosine(1618) in 23S rRNA + S-adenosyl-L-methionine = N(6)-methyladenosine(1618) in 23S rRNA + S-adenosyl-L-homocysteine + H(+). Its function is as follows. Specifically methylates the adenine in position 1618 of 23S rRNA. This is Ribosomal RNA large subunit methyltransferase F from Vibrio campbellii (strain ATCC BAA-1116).